A 65-amino-acid chain; its full sequence is Large ribosomal subunit protein bL35 (65 aa).

Basic residues predominate over residues 1–45 (MPKMKSHSGAKKRFKKTGNGKIKRKKANKGHLLTKKNAKRKRQLR). Positions 1–65 (MPKMKSHSGA…RDRIKRMLST (65 aa)) are disordered. Residues 48–57 (VVVDDKANRD) show a composition bias toward basic and acidic residues.

Belongs to the bacterial ribosomal protein bL35 family.

The protein is Large ribosomal subunit protein bL35 of Salinibacter ruber (strain DSM 13855 / M31).